Consider the following 335-residue polypeptide: MTGTSLAATYGPIAGADLEAELAQPRTADGDAQDAAVLERDGGAHALPFASGGAFGRAPRDDDDDRRGAGDASVRLTRVSKRYGERTVLADVDLAIERGGFVSIVGRSGCGKSTLLRLVAELETPSAGTLVKRGDGGGVLDTRIMYQDARLLPWKTVLQNVMLGLGRRAKDDARAVLDEVGLLARAHDWPAQLSGGQRQRVALARALVHRPQLLLLDEPLGALDALTRIEMHELIERLWREHRFTALLVTHDVQEAVSLADRILLIEAGRIAFDQPVPLERPRARASAAFAELEDRVLQRVLTGSDPAGATSAAASAGGAARGRAAQANGLRWAV.

The segment at 48–71 (PFASGGAFGRAPRDDDDDRRGAGD) is disordered. The ABC transporter domain maps to 74 to 293 (VRLTRVSKRY…ARASAAFAEL (220 aa)). 106-113 (GRSGCGKS) contacts ATP.

It belongs to the ABC transporter superfamily. Aliphatic sulfonates importer (TC 3.A.1.17.2) family. In terms of assembly, the complex is composed of two ATP-binding proteins (SsuB), two transmembrane proteins (SsuC) and a solute-binding protein (SsuA).

Its subcellular location is the cell inner membrane. It carries out the reaction ATP + H2O + aliphatic sulfonate-[sulfonate-binding protein]Side 1 = ADP + phosphate + aliphatic sulfonateSide 2 + [sulfonate-binding protein]Side 1.. Functionally, part of the ABC transporter complex SsuABC involved in aliphatic sulfonates import. Responsible for energy coupling to the transport system. This chain is Aliphatic sulfonates import ATP-binding protein SsuB, found in Burkholderia thailandensis (strain ATCC 700388 / DSM 13276 / CCUG 48851 / CIP 106301 / E264).